We begin with the raw amino-acid sequence, 646 residues long: Chaperone protein DnaK (646 aa).

Thr-198 is subject to Phosphothreonine; by autocatalysis. Residues Glu-603–Lys-646 form a disordered region. A compositionally biased stretch (low complexity) spans Ala-618–Gln-627.

Belongs to the heat shock protein 70 family.

Functionally, acts as a chaperone. This Acinetobacter baumannii (strain AB307-0294) protein is Chaperone protein DnaK.